The sequence spans 598 residues: UvrABC system protein C (598 aa).

Residues 14 to 91 (DSPGCYLHKD…IQKNMPKYNI (78 aa)) enclose the GIY-YIG domain. The 36-residue stretch at 196–231 (DKIIEDLRSKMLAASEEMAFERAAEYRDLISGIATM) folds into the UVR domain.

Belongs to the UvrC family. In terms of assembly, interacts with UvrB in an incision complex.

It localises to the cytoplasm. Its function is as follows. The UvrABC repair system catalyzes the recognition and processing of DNA lesions. UvrC both incises the 5' and 3' sides of the lesion. The N-terminal half is responsible for the 3' incision and the C-terminal half is responsible for the 5' incision. This Streptococcus pyogenes serotype M5 (strain Manfredo) protein is UvrABC system protein C.